The chain runs to 272 residues: Bifunctional protein FolD 2 (272 aa).

NADP(+) contacts are provided by residues 157 to 159, T182, and I223; that span reads GRS.

Belongs to the tetrahydrofolate dehydrogenase/cyclohydrolase family. As to quaternary structure, homodimer.

It catalyses the reaction (6R)-5,10-methylene-5,6,7,8-tetrahydrofolate + NADP(+) = (6R)-5,10-methenyltetrahydrofolate + NADPH. The enzyme catalyses (6R)-5,10-methenyltetrahydrofolate + H2O = (6R)-10-formyltetrahydrofolate + H(+). It functions in the pathway one-carbon metabolism; tetrahydrofolate interconversion. Catalyzes the oxidation of 5,10-methylenetetrahydrofolate to 5,10-methenyltetrahydrofolate and then the hydrolysis of 5,10-methenyltetrahydrofolate to 10-formyltetrahydrofolate. The chain is Bifunctional protein FolD 2 from Syntrophomonas wolfei subsp. wolfei (strain DSM 2245B / Goettingen).